Here is a 98-residue protein sequence, read N- to C-terminus: Large ribosomal subunit protein bL27 (98 aa).

Positions 1-9 (MLKMNLQLF) are excised as a propeptide.

This sequence belongs to the bacterial ribosomal protein bL27 family. The N-terminus is cleaved by ribosomal processing cysteine protease Prp.

The sequence is that of Large ribosomal subunit protein bL27 from Desulfitobacterium hafniense (strain DSM 10664 / DCB-2).